The primary structure comprises 393 residues: Mitogen-activated protein kinase 10 (393 aa).

In terms of domain architecture, Protein kinase spans 60-345; it reads KPPIRPIGRG…VKEALAHPYL (286 aa). ATP is bound by residues 66-74 and K89; that span reads IGRGACGIV. D186 serves as the catalytic Proton acceptor. T218 is subject to Phosphothreonine. Residues 218–220 carry the TXY motif; sequence TEY. Phosphotyrosine is present on Y220. Position 223 is a phosphothreonine (T223).

This sequence belongs to the protein kinase superfamily. CMGC Ser/Thr protein kinase family. MAP kinase subfamily. In terms of assembly, interacts with MKK2. Dually phosphorylated on Thr-218 and Tyr-220, which activates the enzyme.

The enzyme catalyses L-seryl-[protein] + ATP = O-phospho-L-seryl-[protein] + ADP + H(+). The catalysed reaction is L-threonyl-[protein] + ATP = O-phospho-L-threonyl-[protein] + ADP + H(+). Activated by threonine and tyrosine phosphorylation. The polypeptide is Mitogen-activated protein kinase 10 (MPK10) (Arabidopsis thaliana (Mouse-ear cress)).